We begin with the raw amino-acid sequence, 526 residues long: Peptide chain release factor 3 (526 aa).

The 267-residue stretch at 11-277 (SKRRTFAIIS…SLIKWAPSPL (267 aa)) folds into the tr-type G domain. GTP contacts are provided by residues 20–27 (SHPDAGKT), 88–92 (DTPGH), and 142–145 (NKLD).

The protein belongs to the TRAFAC class translation factor GTPase superfamily. Classic translation factor GTPase family. PrfC subfamily.

It localises to the cytoplasm. Increases the formation of ribosomal termination complexes and stimulates activities of RF-1 and RF-2. It binds guanine nucleotides and has strong preference for UGA stop codons. It may interact directly with the ribosome. The stimulation of RF-1 and RF-2 is significantly reduced by GTP and GDP, but not by GMP. The protein is Peptide chain release factor 3 of Buchnera aphidicola subsp. Acyrthosiphon pisum (strain 5A).